A 1537-amino-acid polypeptide reads, in one-letter code: Dual oxidase (1537 aa).

A disordered region spans residues 1 to 29; it reads MSVPSAPHQRAESKNRVPRPGQKNRKLPK. The Extracellular segment spans residues 1–626; it reads MSVPSAPHQR…EGYDYFSGSE (626 aa). Residues 63–628 form a peroxidase-like; mediates peroxidase activity region; it reads MYSQTEKQRY…YDYFSGSELM (566 aa). N-linked (GlcNAc...) asparagine glycosylation is found at asparagine 133, asparagine 233, asparagine 577, and asparagine 606. The helical transmembrane segment at 627–647 threads the bilayer; it reads LMFIYVCVFLGFVPILCAGAG. At 648–1029 the chain is on the cytoplasmic side; sequence YCVVKLQNSK…ITFLEENRQN (382 aa). Serine 826 carries the phosphoserine modification. EF-hand domains lie at 855–890, 891–926, and 936–971; these read PNDM…FSRG, KTDD…LVEI, and QVTE…YKGD. 9 residues coordinate Ca(2+): aspartate 868, aspartate 870, aspartate 872, arginine 874, glutamate 879, aspartate 904, aspartate 906, asparagine 908, and glutamate 915. The helical transmembrane segment at 1030–1050 threads the bilayer; sequence IFYLFLFYVVTIVLFVERFIH. The Extracellular portion of the chain corresponds to 1051–1065; it reads YSFMAEHTDLRHIMG. A helical transmembrane segment spans residues 1066–1086; the sequence is VGIAITRGSAASLSFCYSLLL. The 141-residue stretch at 1078-1218 folds into the Ferric oxidoreductase domain; that stretch reads LSFCYSLLLL…TLYIGLYLLS (141 aa). The Cytoplasmic segment spans residues 1087–1116; it reads LTMSRNLITKLKEFPIQQYIPLDSHIQFHK. Phosphotyrosine is present on tyrosine 1105. A helical transmembrane segment spans residues 1117–1137; sequence IAACTALFFSVLHTVGHIVNF. The Extracellular segment spans residues 1138–1171; that stretch reads YHVSTQSHENLRCLTREVHFASDYKPDITFWLFQ. A helical transmembrane segment spans residues 1172-1192; that stretch reads TVTGTTGVMLFIIMCIIFVFA. Residues 1193–1202 lie on the Cytoplasmic side of the membrane; it reads HPTIRKKAYN. Residues 1203–1223 form a helical membrane-spanning segment; that stretch reads FFWNMHTLYIGLYLLSLIHGL. Residues 1224–1230 lie on the Extracellular side of the membrane; that stretch reads ARLTGPP. A helical membrane pass occupies residues 1231–1251; sequence RFWMFFLGPGIVYTLDKIVSL. Over 1252–1537 the chain is Cytoplasmic; it reads RTKYMALDVI…YFIHHFENFG (286 aa). Positions 1253-1358 constitute an FAD-binding FR-type domain; the sequence is TKYMALDVID…EGPFGGGNQD (106 aa).

The protein in the N-terminal section; belongs to the peroxidase family.

The protein localises to the membrane. The enzyme catalyses NADH + O2 + H(+) = H2O2 + NAD(+). The catalysed reaction is NADPH + O2 + H(+) = H2O2 + NADP(+). Peroxidase activity is inhibited by aminotriazole and azide. Its function is as follows. Plays a role in innate immunity limiting microbial proliferation in the gut. Acts downstream of a hh-signaling pathway to induce the production of reactive oxygen species (ROS) in response to intestinal bacterial infection. May generate antimicrobial oxidative burst through its peroxidase-like domain. This is Dual oxidase (Duox) from Drosophila melanogaster (Fruit fly).